The chain runs to 708 residues: Nicastrin (708 aa).

The N-terminal stretch at 1–34 (MATARGGSGPDPGSRGLLLLSFSVVLAGLCGGNS) is a signal peptide. Topologically, residues 35–668 (VERKIYIPLN…IFLIASKELE (634 aa)) are lumenal. N-linked (GlcNAc...) asparagine glycosylation is found at N44, N54, and N128. C49 and C61 are joined by a disulfide. C139 and C158 are disulfide-bonded. N186 and N203 each carry an N-linked (GlcNAc...) asparagine glycan. 2 disulfide bridges follow: C194-C212 and C229-C247. N-linked (GlcNAc...) asparagine glycans are attached at residues N263, N386, N434, N463, N507, N529, N561, N572, N579, N593, and N611. Residues C585 and C619 are joined by a disulfide bond. The chain crosses the membrane as a helical span at residues 669–689 (FITLIVGFSILVFSLIVTYCI). Residues 690–708 (NAKADVLFVAPREPGAVSY) are Cytoplasmic-facing.

It belongs to the nicastrin family. As to quaternary structure, component of the gamma-secretase complex. The functional gamma-secretase complex is composed of at least four polypeptides: a presenilin homodimer (PSEN1 or PSEN2), nicastrin (NCSTN), APH1 (APH1A or APH1B) and PEN2. Binds to proteolytic processed C-terminal fragments C83 and C99 of the amyloid precursor protein (APP). Interacts with PSEN1 and PSEN2. In terms of processing, N-glycosylated.

It localises to the membrane. The protein localises to the cytoplasmic vesicle membrane. The protein resides in the melanosome. In terms of biological role, essential subunit of the gamma-secretase complex, an endoprotease complex that catalyzes the intramembrane cleavage of integral membrane proteins such as Notch receptors and APP (amyloid-beta precursor protein). The gamma-secretase complex plays a role in Notch and Wnt signaling cascades and regulation of downstream processes via its role in processing key regulatory proteins, and by regulating cytosolic CTNNB1 levels. This Rattus norvegicus (Rat) protein is Nicastrin (Ncstn).